We begin with the raw amino-acid sequence, 390 residues long: Tryptophan synthase beta chain 2 (390 aa).

N6-(pyridoxal phosphate)lysine is present on K83.

It belongs to the TrpB family. As to quaternary structure, tetramer of two alpha and two beta chains. The cofactor is pyridoxal 5'-phosphate.

The catalysed reaction is (1S,2R)-1-C-(indol-3-yl)glycerol 3-phosphate + L-serine = D-glyceraldehyde 3-phosphate + L-tryptophan + H2O. Its pathway is amino-acid biosynthesis; L-tryptophan biosynthesis; L-tryptophan from chorismate: step 5/5. Functionally, the beta subunit is responsible for the synthesis of L-tryptophan from indole and L-serine. In Methanothermobacter marburgensis (strain ATCC BAA-927 / DSM 2133 / JCM 14651 / NBRC 100331 / OCM 82 / Marburg) (Methanobacterium thermoautotrophicum), this protein is Tryptophan synthase beta chain 2 (trpB2).